A 368-amino-acid polypeptide reads, in one-letter code: Peptide chain release factor 2 (368 aa).

Position 248 is an N5-methylglutamine (glutamine 248).

The protein belongs to the prokaryotic/mitochondrial release factor family. In terms of processing, methylated by PrmC. Methylation increases the termination efficiency of RF2.

Its subcellular location is the cytoplasm. In terms of biological role, peptide chain release factor 2 directs the termination of translation in response to the peptide chain termination codons UGA and UAA. This Corynebacterium glutamicum (strain R) protein is Peptide chain release factor 2.